The following is a 228-amino-acid chain: Claudin-10 (228 aa).

A helical transmembrane segment spans residues 1-21; the sequence is MASTASEIIAFMVSISGWVLV. Topologically, residues 22–80 are extracellular; the sequence is SSTLPTDYWKVSTIDGTVITTATYWANLWKACVTDSTGVSNCKDFPSMLALDGYIQACR. The chain crosses the membrane as a helical span at residues 81–101; sequence GLMIAAVSLGFFGSIFALFGM. Residues 102-115 lie on the Cytoplasmic side of the membrane; sequence KCTKVGGSDKAKAK. The chain crosses the membrane as a helical span at residues 116-136; sequence IACLAGIVFILSGLCSMTGCS. The Extracellular portion of the chain corresponds to 137-160; the sequence is LYANKITTEFFDPLFVEQKYELGA. A helical membrane pass occupies residues 161-181; that stretch reads ALFIGWAGASLCIIGGVIFCF. Residues 182–228 are Cytoplasmic-facing; that stretch reads SISDNNKTPRYTYNGATSVMSSRTKYHGGEDFKTTNPSKQFDKNAYV.

It belongs to the claudin family. Can form homodimers both in trans (interaction between CLDN10 molecules in opposing membranes) and in cis (interaction between CLDN10 molecules within one membrane). In terms of assembly, interacts with CLDN19. As to expression, expressed in the kidney, eccrine sweat glands and in all layers of the epidermis. In the kidney, it is detected in the thick ascending limb of Henle's loop (TAL). In the sweat glands, it is expressed in cells from secretory portions, corresponding to the clear cells.

The protein localises to the cell junction. The protein resides in the tight junction. It is found in the cell membrane. The catalysed reaction is Na(+)(in) = Na(+)(out). The enzyme catalyses Li(+)(in) = Li(+)(out). It carries out the reaction K(+)(in) = K(+)(out). It catalyses the reaction Rb(+)(in) = Rb(+)(out). The catalysed reaction is Cs(+)(in) = Cs(+)(out). The enzyme catalyses NH4(+)(in) = NH4(+)(out). It carries out the reaction methylamine(out) = methylamine(in). It catalyses the reaction Mg(2+)(in) = Mg(2+)(out). The catalysed reaction is Ca(2+)(in) = Ca(2+)(out). The enzyme catalyses Sr(2+)(in) = Sr(2+)(out). It carries out the reaction chloride(in) = chloride(out). It catalyses the reaction nitrate(in) = nitrate(out). In terms of biological role, forms paracellular channels: polymerizes in tight junction strands with cation- and anion-selective channels through the strands, conveying epithelial permeability in a process known as paracellular tight junction permeability. Forms cation-selective paracellular channels. In sweat glands and in the thick ascending limb (TAL) of Henle's loop in kidney, it controls paracellular sodium permeability which is essential for proper sweat production and renal function. Its function is as follows. Forms anion-selective paracellular channels. In renal proximal tubules, it conveys selective chloride over hydrogencarbonate anion permeability which is required for renal chloride reabsorption and salt homeostasis. This Homo sapiens (Human) protein is Claudin-10.